A 510-amino-acid chain; its full sequence is 3,4-dihydroxyphenylacetaldehyde synthase (510 aa).

Residue Asn192 is part of the active site. An N6-(pyridoxal phosphate)lysine modification is found at Lys303.

Belongs to the group II decarboxylase family. It depends on pyridoxal 5'-phosphate as a cofactor.

It catalyses the reaction L-dopa + O2 + H2O + H(+) = 3,4-dihydroxyphenylacetaldehyde + H2O2 + NH4(+) + CO2. Its function is as follows. Catalyzes the decarboxylation-oxidative deamination of L-3,4-dihydroxyphenylalanine (L-DOPA) to 3,4-dihydroxylphenylacetaldehyde (DHPAA). Involved in cuticle development. Probably responsible for the protein cross-linking during the development of flexible cuticles. This chain is 3,4-dihydroxyphenylacetaldehyde synthase (amd), found in Drosophila melanogaster (Fruit fly).